The sequence spans 95 residues: MLTLQAETRKEKGTGFSRRLRIHNKFPAVLYGVKKTEILLILDHNTTFNLQKKIEFYKENLLLCVQDKKYKVKVQAIQRHSFKSKLLHIDFLYVE.

The protein belongs to the bacterial ribosomal protein bL25 family. In terms of assembly, part of the 50S ribosomal subunit; part of the 5S rRNA/L5/L18/L25 subcomplex. Contacts the 5S rRNA. Binds to the 5S rRNA independently of L5 and L18.

Its function is as follows. This is one of the proteins that binds to the 5S RNA in the ribosome where it forms part of the central protuberance. The protein is Large ribosomal subunit protein bL25 of Buchnera aphidicola subsp. Acyrthosiphon pisum (strain 5A).